Reading from the N-terminus, the 413-residue chain is Ribosomal RNA large subunit methyltransferase G (413 aa).

The tract at residues 389–413 is disordered; sequence EAEVEQAFDTETPHPQSALYGKPKA.

It belongs to the methyltransferase superfamily. RlmG family.

It is found in the cytoplasm. It carries out the reaction guanosine(1835) in 23S rRNA + S-adenosyl-L-methionine = N(2)-methylguanosine(1835) in 23S rRNA + S-adenosyl-L-homocysteine + H(+). Functionally, specifically methylates the guanine in position 1835 (m2G1835) of 23S rRNA. This Shewanella pealeana (strain ATCC 700345 / ANG-SQ1) protein is Ribosomal RNA large subunit methyltransferase G.